We begin with the raw amino-acid sequence, 111 residues long: uncharacterized protein (111 aa).

This is an uncharacterized protein from Bacillus subtilis (strain 168).